The sequence spans 457 residues: Variant surface glycoprotein 20 (457 aa).

An N-terminal signal peptide occupies residues Met-1–Thr-20. The span at Arg-385 to Asn-397 shows a compositional bias: polar residues. A disordered region spans residues Arg-385 to Glu-406. Asn-436 carries an N-linked (GlcNAc...) asparagine glycan. Residue Ser-440 is the site of GPI-anchor amidated serine attachment. Residues Asn-441–Phe-457 constitute a propeptide, removed in mature form.

Its subcellular location is the cell membrane. Its function is as follows. VSG forms a coat on the surface of the parasite. The trypanosome evades the immune response of the host by expressing a series of antigenically distinct VSGs from an estimated 1000 VSG genes. This chain is Variant surface glycoprotein 20, found in Trypanosoma equiperdum.